A 414-amino-acid chain; its full sequence is 3-oxo-isoapionate-4-phosphate transcarboxylase/hydrolase (414 aa).

Residues K180, D182, and E183 each coordinate Mg(2+). Residue K180 is modified to N6-carboxylysine.

The protein belongs to the RuBisCO large chain family. Requires Mg(2+) as cofactor.

It catalyses the reaction 3-oxoisoapionate 4-phosphate + H2O = (2R)-3-phosphoglycerate + glycolate + H(+). It functions in the pathway carbohydrate metabolism. In terms of biological role, involved in catabolism of D-apiose. Catalyzes the conversion of 3-oxo-isoapionate 4-phosphate to 3-phosphoglycerate and glycolate. The chain is 3-oxo-isoapionate-4-phosphate transcarboxylase/hydrolase from Xanthobacter autotrophicus (strain ATCC BAA-1158 / Py2).